Consider the following 314-residue polypeptide: Ribosomal protein L11 methyltransferase (314 aa).

S-adenosyl-L-methionine contacts are provided by Thr164, Gly185, Asp207, and Asn249.

Belongs to the methyltransferase superfamily. PrmA family.

Its subcellular location is the cytoplasm. The catalysed reaction is L-lysyl-[protein] + 3 S-adenosyl-L-methionine = N(6),N(6),N(6)-trimethyl-L-lysyl-[protein] + 3 S-adenosyl-L-homocysteine + 3 H(+). Functionally, methylates ribosomal protein L11. The chain is Ribosomal protein L11 methyltransferase from Clostridium beijerinckii (strain ATCC 51743 / NCIMB 8052) (Clostridium acetobutylicum).